The chain runs to 74 residues: Small ribosomal subunit protein eS17 (74 aa).

This sequence belongs to the eukaryotic ribosomal protein eS17 family.

This Aeropyrum pernix (strain ATCC 700893 / DSM 11879 / JCM 9820 / NBRC 100138 / K1) protein is Small ribosomal subunit protein eS17.